The following is a 182-amino-acid chain: Large ribosomal subunit protein uL6 (182 aa).

The protein belongs to the universal ribosomal protein uL6 family. Part of the 50S ribosomal subunit.

In terms of biological role, this protein binds to the 23S rRNA, and is important in its secondary structure. It is located near the subunit interface in the base of the L7/L12 stalk, and near the tRNA binding site of the peptidyltransferase center. The polypeptide is Large ribosomal subunit protein uL6 (Methanococcus vannielii).